We begin with the raw amino-acid sequence, 109 residues long: Elicitor peptide 2 (109 aa).

Residues 1–73 (MEKLDKRREE…KDDDVVVLLR (73 aa)) constitute a propeptide that is removed on maturation. Basic and acidic residues predominate over residues 74-88 (DNKAKSKKRDKEKPS). The tract at residues 74–109 (DNKAKSKKRDKEKPSSGRPGQTNSVPNAAIQVYKED) is disordered.

The protein belongs to the brassicaceae elicitor peptide family.

Elicitor of plant defense. This chain is Elicitor peptide 2 (PEP2), found in Arabidopsis thaliana (Mouse-ear cress).